A 278-amino-acid chain; its full sequence is Nucleotide-binding protein Tbd_0529 (278 aa).

8 to 15 is a binding site for ATP; it reads GLSGSGKS. 57 to 60 serves as a coordination point for GTP; sequence DARS.

This sequence belongs to the RapZ-like family.

Displays ATPase and GTPase activities. This is Nucleotide-binding protein Tbd_0529 from Thiobacillus denitrificans (strain ATCC 25259 / T1).